The chain runs to 377 residues: NAC domain-containing protein 76 (377 aa).

The 150-residue stretch at 10-159 folds into the NAC domain; the sequence is VPPGFRFHPT…GWVVCRAFKK (150 aa). Residues 110-165 mediate DNA binding; it reads IGMRKTLVFYKGRAPNGQKTDWIMHEYRLESDENAPPQEEGWVVCRAFKKKPMTGQ. Residues 312-347 form a disordered region; it reads GVSGFGGHHEEDNNKIGHYNNEESNNKGSVETASST. The span at 318 to 336 shows a compositional bias: basic and acidic residues; it reads GHHEEDNNKIGHYNNEESN. The segment covering 337–347 has biased composition (polar residues); the sequence is NKGSVETASST.

Belongs to the plant vascular related NAC-domain protein family. As to quaternary structure, interacts with NAC030/VND7. As to expression, detected in root protoxylem and metaxylem poles and in vessels of protoxylems, outermost metaxylems, inner metaxylems, shoots and hypocotyls. Expressed in roots, hypocotyls, cotyledons and leaves. Present in developing xylems. Specifically expressed in vessels but not in interfascicular fibers in stems.

It localises to the nucleus. Functionally, transcription activator that binds to the secondary wall NAC binding element (SNBE), 5'-(T/A)NN(C/T)(T/C/G)TNNNNNNNA(A/C)GN(A/C/T)(A/T)-3', in the promoter of target genes. Involved in xylem formation by promoting the expression of secondary wall-associated transcription factors and of genes involved in secondary wall biosynthesis and programmed cell death, genes driven by the secondary wall NAC binding element (SNBE). Triggers thickening of secondary walls. The protein is NAC domain-containing protein 76 of Arabidopsis thaliana (Mouse-ear cress).